Consider the following 55-residue polypeptide: Large ribosomal subunit protein bL33 (55 aa).

This sequence belongs to the bacterial ribosomal protein bL33 family.

This is Large ribosomal subunit protein bL33 from Brucella abortus (strain S19).